We begin with the raw amino-acid sequence, 316 residues long: Glutathione synthetase (316 aa).

Residues 123–309 form the ATP-grasp domain; it reads NEKISTLSFK…ISGILLDSIE (187 aa). ATP is bound at residue 149–206; sequence FQEKFGDIILKPINKMGGDSVFYVKKNDPNVSVIIDQLTNYGNSFCLIQEYIKEILNG. The Mg(2+) site is built by Glu-280 and Asn-282.

Belongs to the prokaryotic GSH synthase family. The cofactor is Mg(2+). Mn(2+) serves as cofactor.

It carries out the reaction gamma-L-glutamyl-L-cysteine + glycine + ATP = glutathione + ADP + phosphate + H(+). It participates in sulfur metabolism; glutathione biosynthesis; glutathione from L-cysteine and L-glutamate: step 2/2. The chain is Glutathione synthetase from Wigglesworthia glossinidia brevipalpis.